The chain runs to 201 residues: Small ribosomal subunit protein uS4 (201 aa).

An S4 RNA-binding domain is found at 93-153 (QRLDNIVYRL…EKSKNLVIIK (61 aa)).

This sequence belongs to the universal ribosomal protein uS4 family. In terms of assembly, part of the 30S ribosomal subunit. Contacts protein S5. The interaction surface between S4 and S5 is involved in control of translational fidelity.

In terms of biological role, one of the primary rRNA binding proteins, it binds directly to 16S rRNA where it nucleates assembly of the body of the 30S subunit. Its function is as follows. With S5 and S12 plays an important role in translational accuracy. The chain is Small ribosomal subunit protein uS4 from Latilactobacillus sakei subsp. sakei (strain 23K) (Lactobacillus sakei subsp. sakei).